The following is a 281-amino-acid chain: Acetyl-coenzyme A carboxylase carboxyl transferase subunit beta (281 aa).

Residues 23–281 (IWTKCGSCQA…SLLVKLHYKN (259 aa)) form the CoA carboxyltransferase N-terminal domain. Residues Cys27, Cys30, Cys46, and Cys49 each contribute to the Zn(2+) site. The C4-type zinc finger occupies 27–49 (CGSCQAVLYKSELEKLQEVCPKC).

This sequence belongs to the AccD/PCCB family. In terms of assembly, acetyl-CoA carboxylase is a heterohexamer composed of biotin carboxyl carrier protein (AccB), biotin carboxylase (AccC) and two subunits each of ACCase subunit alpha (AccA) and ACCase subunit beta (AccD). The cofactor is Zn(2+).

Its subcellular location is the cytoplasm. It catalyses the reaction N(6)-carboxybiotinyl-L-lysyl-[protein] + acetyl-CoA = N(6)-biotinyl-L-lysyl-[protein] + malonyl-CoA. It participates in lipid metabolism; malonyl-CoA biosynthesis; malonyl-CoA from acetyl-CoA: step 1/1. Its function is as follows. Component of the acetyl coenzyme A carboxylase (ACC) complex. Biotin carboxylase (BC) catalyzes the carboxylation of biotin on its carrier protein (BCCP) and then the CO(2) group is transferred by the transcarboxylase to acetyl-CoA to form malonyl-CoA. This is Acetyl-coenzyme A carboxylase carboxyl transferase subunit beta from Alteromonas mediterranea (strain DSM 17117 / CIP 110805 / LMG 28347 / Deep ecotype).